A 487-amino-acid chain; its full sequence is N-succinylglutamate 5-semialdehyde dehydrogenase (487 aa).

221 to 226 is an NAD(+) binding site; that stretch reads GSSDTG. Catalysis depends on residues glutamate 244 and cysteine 278.

Belongs to the aldehyde dehydrogenase family. AstD subfamily.

It catalyses the reaction N-succinyl-L-glutamate 5-semialdehyde + NAD(+) + H2O = N-succinyl-L-glutamate + NADH + 2 H(+). Its pathway is amino-acid degradation; L-arginine degradation via AST pathway; L-glutamate and succinate from L-arginine: step 4/5. Functionally, catalyzes the NAD-dependent reduction of succinylglutamate semialdehyde into succinylglutamate. The sequence is that of N-succinylglutamate 5-semialdehyde dehydrogenase from Burkholderia cenocepacia (strain ATCC BAA-245 / DSM 16553 / LMG 16656 / NCTC 13227 / J2315 / CF5610) (Burkholderia cepacia (strain J2315)).